The following is a 428-amino-acid chain: AA14 family lytic polysaccharide monooxygenase A (428 aa).

The signal sequence occupies residues 1–21 (MLRSLPASLALVAAFASKASA). N-linked (GlcNAc...) asparagine glycosylation is found at Asn-34 and Asn-52. Disulfide bonds link Cys-88-Cys-112, Cys-131-Cys-158, Cys-174-Cys-179, Cys-181-Cys-203, and Cys-223-Cys-239. Asn-155 carries an N-linked (GlcNAc...) asparagine glycan. Disordered regions lie at residues 216 to 239 (KPAV…PGNC) and 292 to 428 (SSGT…HNAH). Over residues 223 to 232 (CGADPDHGKP) the composition is skewed to basic and acidic residues. N-linked (GlcNAc...) asparagine glycosylation occurs at Asn-238. The segment covering 292-379 (SSGTGSSPTS…SVATEASSSP (88 aa)) has biased composition (low complexity). Residues 380-402 (IASTTVDEAVVSSSTVGSINPTR) show a composition bias toward polar residues. Residues 414 to 428 (QKKKRKHARHLHNAH) are compositionally biased toward basic residues.

The cofactor is Cu(2+).

The protein localises to the secreted. Lytic polysaccharide monooxygenase (LPMO) showing oxidase and peroxidase activities that are common for LPMOs. Catalysis by LPMOs requires the reduction of the active-site copper from Cu(II) to Cu(I) by a reducing agent and H(2)O(2) or O(2) as a cosubstrate. Shows no activity on cellulose-associated xylan or any other tested polysaccharide substrate, meaning that the substrate rremains unknown. The protein is AA14 family lytic polysaccharide monooxygenase A of Trametes coccinea (strain BRFM310) (Pycnoporus coccineus).